The chain runs to 20 residues: Bulb protein (20 aa).

The disordered stretch occupies residues alanine 1–serine 20.

The chain is Bulb protein from Narcissus pseudonarcissus (Daffodil).